We begin with the raw amino-acid sequence, 292 residues long: Glutamate racemase (292 aa).

Substrate is bound by residues 28–29 (DS) and 60–61 (YG). C91 (proton donor/acceptor) is an active-site residue. Residue 92 to 93 (NT) coordinates substrate. C200 serves as the catalytic Proton donor/acceptor. 201 to 202 (TH) lines the substrate pocket.

This sequence belongs to the aspartate/glutamate racemases family.

The catalysed reaction is L-glutamate = D-glutamate. Its pathway is cell wall biogenesis; peptidoglycan biosynthesis. Provides the (R)-glutamate required for cell wall biosynthesis. The polypeptide is Glutamate racemase (Trichormus variabilis (strain ATCC 29413 / PCC 7937) (Anabaena variabilis)).